The following is a 650-amino-acid chain: Serine/threonine-protein kinase oca2 (650 aa).

A compositionally biased stretch (polar residues) spans Met-1 to Gly-14. Disordered stretches follow at residues Met-1–Ile-210 and His-222–Ala-288. Ser-72 bears the Phosphoserine mark. The segment covering Asn-78–Glu-98 has biased composition (basic and acidic residues). A compositionally biased stretch (polar residues) spans Pro-140–Asn-154. Basic residues-rich tracts occupy residues His-222–His-231 and His-245–His-257. A compositionally biased stretch (basic and acidic residues) spans His-258–Pro-279. Ser-286 is subject to Phosphoserine. The Protein kinase domain occupies Gly-302–Ile-614. ATP is bound by residues Leu-308–Val-316 and Lys-331. The Proton acceptor role is filled by Asp-425. Residues Pro-549–Lys-570 are disordered.

The protein belongs to the protein kinase superfamily. Ser/Thr protein kinase family.

The protein localises to the cytoplasm. It carries out the reaction L-seryl-[protein] + ATP = O-phospho-L-seryl-[protein] + ADP + H(+). It catalyses the reaction L-threonyl-[protein] + ATP = O-phospho-L-threonyl-[protein] + ADP + H(+). Functionally, overexpression causes cell cycle arrest. The sequence is that of Serine/threonine-protein kinase oca2 from Schizosaccharomyces pombe (strain 972 / ATCC 24843) (Fission yeast).